The primary structure comprises 841 residues: Neuronal tyrosine-phosphorylated phosphoinositide-3-kinase adapter 1 (841 aa).

5 disordered regions span residues 1-45, 64-448, 655-679, 745-769, and 812-833; these read MNLL…PGVR, PASQ…PAAL, RAWN…TSGI, RPCS…PLPP, and LPSW…RRQH. Over residues 8-25 the composition is skewed to basic and acidic residues; the sequence is TKLEWRQHKEEEAKRSSS. A compositionally biased stretch (low complexity) spans 26-39; sequence KEVAPAGSAGPAAG. The segment at 76 to 186 is involved in CYFIP1- and NCKAP1-binding; the sequence is SAMAPRSLSC…DESCPPGPSP (111 aa). Gly residues predominate over residues 94–103; it reads VGGGPGGASG. Over residues 114 to 123 the composition is skewed to basic residues; it reads PPAKPRRHPS. Positions 167–176 are enriched in polar residues; it reads SPNTQLSVSF. The segment covering 224 to 243 has biased composition (gly residues); the sequence is FRGGGRSGGGLAGPPLGGGG. The segment covering 252–261 has biased composition (acidic residues); the sequence is SDSEESEAIY. A compositionally biased stretch (pro residues) spans 279 to 295; sequence GPPPLTATSPPQQPHAL. Over residues 759-769 the composition is skewed to pro residues; sequence PALPLPLPLPP.

Belongs to the NYAP family. Interacts with ACOT9, ARHGAP26 and PIK3R2. Interacts with components of the WAVE1 complex, CYFIP1 and NCKAP1; this interaction mediates PI3K-WAVE1 association and actin cytoskeleton remodeling. In terms of processing, phosphorylated on tyrosine residues by FYN upon stimulation with CNTN5.

Activates PI3K and concomitantly recruits the WAVE1 complex to the close vicinity of PI3K and regulates neuronal morphogenesis. The polypeptide is Neuronal tyrosine-phosphorylated phosphoinositide-3-kinase adapter 1 (NYAP1) (Homo sapiens (Human)).